The chain runs to 366 residues: Growth hormone secretagogue receptor type 1 (366 aa).

The Extracellular segment spans residues 1 to 40 (MWNATLSEEPGYNLTLPDLGWDAPADNDSLTDELLPLFPA). Residues Asn3, Asn13, and Asn27 are each glycosylated (N-linked (GlcNAc...) asparagine). The chain crosses the membrane as a helical span at residues 41–66 (PLLAGVTATCVALFVVGIAGNLLTML). At 67–72 (VVSRFR) the chain is on the cytoplasmic side. Residues 73–96 (ELRTTTNLYLSSMAFSDLLIFLCM) traverse the membrane as a helical segment. Topologically, residues 97 to 117 (PLDLVRLWQYRPWNFGDLLCK) are extracellular. A disulfide bond links Cys116 and Cys198. The chain crosses the membrane as a helical span at residues 118–139 (LFQFVSESCTYATVLTITALSV). The Cytoplasmic segment spans residues 140 to 162 (ERYFAICFPLRAKVVVTKGRVKL). A helical membrane pass occupies residues 163–183 (VILVIWAVAFCSAGPIFVLVG). Topologically, residues 184-211 (VEHENGTDPRDTNECRATEFAVRSGLLT) are extracellular. A glycan (N-linked (GlcNAc...) asparagine) is linked at Asn188. Residues 212–235 (VMVWVSSVFFFLPVFCLTVLYSLI) traverse the membrane as a helical segment. The Cytoplasmic portion of the chain corresponds to 236–263 (GRKLWRRKRGEAAVGASLRDQNHKQTVK). Residues 264–285 (MLAVVVFAFILCWLPFHVGRYL) form a helical membrane-spanning segment. The Extracellular portion of the chain corresponds to 286–302 (FSKSFEPGSLEIAQISQ). Residues 303–326 (YCNLVSFVLFYLSAAINPILYNIM) traverse the membrane as a helical segment. At 327 to 366 (SKKYRVAVFKLLGFEPFSQRKLSTLKDESSRAWTETSINT) the chain is on the cytoplasmic side.

This sequence belongs to the G-protein coupled receptor 1 family.

Its subcellular location is the cell membrane. In terms of biological role, receptor for ghrelin, coupled to G-alpha-11 proteins. Stimulates growth hormone secretion. Also binds other growth hormone releasing peptides (GHRP) (e.g. Met-enkephalin and GHRP-6) as well as non-peptide, low molecular weight secretagogues (e.g. L-692,429, MK-0677, adenosine). This chain is Growth hormone secretagogue receptor type 1 (GHSR), found in Mustela putorius furo (European domestic ferret).